The chain runs to 769 residues: Disintegrin and metalloproteinase domain-containing protein 11 (769 aa).

A signal peptide spans 1–23 (MRLLRRWAFAALLLSLLPTPGLG). A propeptide spanning residues 24 to 225 (TQGPAGALRW…PNRPRLRRKR (202 aa)) is cleaved from the precursor. The tract at residues 40-78 (GGPGAPEVTEPSRLVRESSGGEVRKQQLDTRVRQEPPGG) is disordered. The span at 61-73 (EVRKQQLDTRVRQ) shows a compositional bias: basic and acidic residues. N-linked (GlcNAc...) asparagine glycans are attached at residues Asn96 and Asn163. Residues 226–734 (QVRRGHPTVH…ERYKGPSGTN (509 aa)) lie on the Extracellular side of the membrane. The 200-residue stretch at 239-438 (KYVELIVIND…GGGSCLFNKP (200 aa)) folds into the Peptidase M12B domain. The segment at 332 to 769 (GRTFQSTSSG…NIRRGRSGGA (438 aa)) is required for localization to cerebellar cortex basket cell terminals. Also required for localization of KCNA1, KCNA2, DLG4 and ADAM22 to cerebellar cortex basket cell terminal perisomatic axons and pinceaux. Cystine bridges form between Cys349/Cys433, Cys392/Cys417, Cys394/Cys401, and Cys503/Cys523. The 88-residue stretch at 444–531 (PPECGNGFVE…QCPPNLHKLD (88 aa)) folds into the Disintegrin domain. Asn605 and Asn673 each carry an N-linked (GlcNAc...) asparagine glycan. 3 disulfide bridges follow: Cys677–Cys692, Cys686–Cys698, and Cys700–Cys709. In terms of domain architecture, EGF-like spans 677-709 (CPGSGERRICSHHGVCSNEGKCICQPDWTGKDC). The helical transmembrane segment at 735–755 (IIIGSIAGAVLVAAIVLGGTG) threads the bilayer. The Cytoplasmic segment spans residues 756-769 (WGFKNIRRGRSGGA).

As to quaternary structure, interacts with LGI1 and LGI4. Interacts with KCNA1/KV1.1, KCNA2/KV1.2, DLG4/PSD-95 and ADAM22. The precursor is cleaved by a furin endopeptidase. As to expression, expressed predominantly in brain. Slightly detected or not at all in other tissues.

Its subcellular location is the presynaptic cell membrane. It is found in the perikaryon. It localises to the cell projection. The protein localises to the axon. Its function is as follows. Probable ligand for integrin in the brain. This is a non catalytic metalloprotease-like protein. Required for localization of the potassium channel subunit proteins KCNA1/KV1.1 and KCNA2/KV1.2 at cerebellar cortex basket cell distal terminals, is thereby involved in ephaptic inhibitory synchronization of Purkinje cell firing and response to stress. Plays a role in spatial learning and motor coordination. Involved in the nociceptive pain response to chemical-derived stimulation. The sequence is that of Disintegrin and metalloproteinase domain-containing protein 11 (ADAM11) from Homo sapiens (Human).